The following is a 574-amino-acid chain: Man(5)GlcNAc(2)-PP-dolichol translocation protein RFT1 (574 aa).

The Lumenal segment spans residues 1–24; sequence MAKKNSQLPSTSEQILERSTTGAT. A helical membrane pass occupies residues 25-45; sequence FLMMGQLFTKLVTFILNNLLI. Residues 46–48 are Cytoplasmic-facing; the sequence is RFL. A helical membrane pass occupies residues 49–69; it reads SPRIFGITAFLEFIQGTVLFF. Topologically, residues 70 to 110 are lumenal; sequence SRDAIRLSTLRISDSGNGIIDDDDEEEYQETHYKSKVLQTA. A helical transmembrane segment spans residues 111–131; it reads VNFAYIPFWIGFPLSIGLIAW. At 132–148 the chain is on the cytoplasmic side; it reads QYRNINAYFITLPFFRW. The chain crosses the membrane as a helical span at residues 149–169; sequence SIFLIWLSIIVELLSEPFFIV. At 170-181 the chain is on the lumenal side; sequence NQFMLNYAARSR. Residues 182–202 traverse the membrane as a helical segment; it reads FESIAVTTGCIVNFIVVYAVQ. Residues 203 to 218 lie on the Cytoplasmic side of the membrane; it reads QSRYPMGVVTSDIDKE. Residues 219-239 form a helical membrane-spanning segment; sequence GIAILAFALGKLAHSITLLAC. At 240–319 the chain is on the lumenal side; the sequence is YYWDYLKNFK…INSLCTVEEQ (80 aa). Residues 320 to 340 traverse the membrane as a helical segment; sequence GIYALLSNYGSLLTRLLFAPI. Residues 341-372 are Cytoplasmic-facing; it reads EESLRLFLARLLSSHNPKNLKLSIEVLVNLTR. A helical transmembrane segment spans residues 373 to 393; it reads FYIYLSLMIIVFGPANSSFLL. The Lumenal segment spans residues 394–413; sequence QFLIGSKWSTTSVLDTIRVY. Residues 414–434 traverse the membrane as a helical segment; the sequence is CFYIPFLSLNGIFEAFFQSVA. Residues 435 to 443 lie on the Cytoplasmic side of the membrane; the sequence is TGDQILKHS. A helical membrane pass occupies residues 444–464; that stretch reads YFMMAFSGIFLLNSWLLIEKL. At 465 to 469 the chain is on the lumenal side; it reads KLSIE. The helical transmembrane segment at 470-490 threads the bilayer; it reads GLILSNIINMVLRILYCGVFL. At 491–509 the chain is on the cytoplasmic side; the sequence is NKFHRELFTDSSFFFNFKD. A helical membrane pass occupies residues 510-530; sequence FKTVIIAGSTICLLDWWFIGY. Residues 531–532 lie on the Lumenal side of the membrane; sequence VK. The chain crosses the membrane as a helical span at residues 533-553; that stretch reads NLQQFVVNVLFAMGLLALILV. Residues 554–574 are Cytoplasmic-facing; it reads KERQTIQSFINKRAVSNSKDV.

This sequence belongs to the RFT1 family.

Its subcellular location is the endoplasmic reticulum membrane. It functions in the pathway protein modification; protein glycosylation. Functionally, intramembrane glycolipid transporter that operates in the biosynthetic pathway of dolichol-linked oligosaccharides, the glycan precursors employed in protein asparagine (N)-glycosylation. The sequential addition of sugars to dolichol pyrophosphate produces dolichol-linked oligosaccharides containing fourteen sugars, including two GlcNAcs, nine mannoses and three glucoses. Once assembled, the oligosaccharide is transferred from the lipid to nascent proteins by oligosaccharyltransferases. The assembly of dolichol-linked oligosaccharides begins on the cytosolic side of the endoplasmic reticulum membrane and finishes in its lumen. RFT1 could mediate the translocation of the cytosolically oriented intermediate DolPP-GlcNAc2Man5, produced by ALG11, into the ER lumen where dolichol-linked oligosaccharides assembly continues. However, the intramembrane lipid transporter activity could not be confirmed in vitro. This chain is Man(5)GlcNAc(2)-PP-dolichol translocation protein RFT1, found in Saccharomyces cerevisiae (strain ATCC 204508 / S288c) (Baker's yeast).